The following is a 466-amino-acid chain: Cysteine--tRNA ligase 1 (466 aa).

Cys27 contributes to the Zn(2+) binding site. The short motif at 29–39 (PTVQSPPHIGH) is the 'HIGH' region element. Zn(2+) is bound by residues Cys211, His236, and Glu240. Positions 267–271 (KMSKS) match the 'KMSKS' region motif. Lys270 lines the ATP pocket.

The protein belongs to the class-I aminoacyl-tRNA synthetase family. In terms of assembly, monomer. Requires Zn(2+) as cofactor.

Its subcellular location is the cytoplasm. It carries out the reaction tRNA(Cys) + L-cysteine + ATP = L-cysteinyl-tRNA(Cys) + AMP + diphosphate. This chain is Cysteine--tRNA ligase 1, found in Tropheryma whipplei (strain TW08/27) (Whipple's bacillus).